The primary structure comprises 364 residues: MSHNSFGHLFRVTTWGESHGLALGCVVDGCPPGITFTEAEIQSFLDKRKPGQSKYTTQRREPDQVRVLSGVLLGEDGVTMTTTGTPISMMIENTDQRSKDYGEIARQYRPGHADYAYDVKYGIRDYRGGGRSSARETAARVAAGAIARKVVPGLEVRGALVSIGAHDIDRSRWNWAEVDNNPFFTPDAGSVEVFADYLDGIRKNGSSVGAIIEIVAEGVPAGIGAPIYGKLDQDIASYLMSINAVKGVEIGNGFEAARLTGEENADEMRMGNDGKPIFLSNHAGGVLGGIATGAPVVARFAVKPTSSILTPRRSIDKDGNEVDVMTRGRHDPCVGIRAVPIGEAMVACAIADHYLRHRGQTGRV.

Position 48 (Arg48) interacts with NADP(+). FMN-binding positions include 131–133, 243–244, Gly288, 303–307, and Arg329; these read RSS, NA, and KPTSS.

This sequence belongs to the chorismate synthase family. Homotetramer. The cofactor is FMNH2.

It catalyses the reaction 5-O-(1-carboxyvinyl)-3-phosphoshikimate = chorismate + phosphate. Its pathway is metabolic intermediate biosynthesis; chorismate biosynthesis; chorismate from D-erythrose 4-phosphate and phosphoenolpyruvate: step 7/7. In terms of biological role, catalyzes the anti-1,4-elimination of the C-3 phosphate and the C-6 proR hydrogen from 5-enolpyruvylshikimate-3-phosphate (EPSP) to yield chorismate, which is the branch point compound that serves as the starting substrate for the three terminal pathways of aromatic amino acid biosynthesis. This reaction introduces a second double bond into the aromatic ring system. The protein is Chorismate synthase of Brucella abortus (strain S19).